The chain runs to 133 residues: UPF0134 protein MPN_151 (133 aa).

This sequence belongs to the UPF0134 family.

The chain is UPF0134 protein MPN_151 from Mycoplasma pneumoniae (strain ATCC 29342 / M129 / Subtype 1) (Mycoplasmoides pneumoniae).